The sequence spans 240 residues: uncharacterized protein (240 aa).

The active-site Proton acceptor is the Asp-66. Asp-129 is a catalytic residue. Residue His-131 is the Proton acceptor of the active site.

The protein belongs to the glucosamine/galactosamine-6-phosphate isomerase family.

This is an uncharacterized protein from Escherichia coli (strain K12).